Consider the following 200-residue polypeptide: uncharacterized protein (200 aa).

The Response regulatory domain maps to 3–119; it reads RLFIAEDQRM…DLADAIRKCV (117 aa). A 4-aspartylphosphate modification is found at Asp54. The region spanning 133-198 is the HTH luxR-type domain; that stretch reads MMRDENPLTV…EAASIAEEKG (66 aa). A DNA-binding region (H-T-H motif) is located at residues 157 to 176; it reads TKDITLELYLSQGTVRNYIS.

In terms of processing, phosphorylated by YvfT.

The protein resides in the cytoplasm. Its function is as follows. Member of the two-component regulatory system YvfT/YvfU. This is an uncharacterized protein from Bacillus subtilis (strain 168).